Reading from the N-terminus, the 314-residue chain is 4-hydroxy-3-methylbut-2-enyl diphosphate reductase (314 aa).

Cys-12 is a [4Fe-4S] cluster binding site. Residues His-43 and His-81 each coordinate (2E)-4-hydroxy-3-methylbut-2-enyl diphosphate. Dimethylallyl diphosphate is bound by residues His-43 and His-81. Isopentenyl diphosphate is bound by residues His-43 and His-81. Cys-103 contributes to the [4Fe-4S] cluster binding site. His-131 contributes to the (2E)-4-hydroxy-3-methylbut-2-enyl diphosphate binding site. His-131 contributes to the dimethylallyl diphosphate binding site. His-131 contributes to the isopentenyl diphosphate binding site. The active-site Proton donor is Glu-133. Residue Thr-170 coordinates (2E)-4-hydroxy-3-methylbut-2-enyl diphosphate. Cys-198 serves as a coordination point for [4Fe-4S] cluster. Residues Ser-226, Asn-228, and Ser-271 each coordinate (2E)-4-hydroxy-3-methylbut-2-enyl diphosphate. Residues Ser-226, Asn-228, and Ser-271 each contribute to the dimethylallyl diphosphate site. Positions 226, 228, and 271 each coordinate isopentenyl diphosphate.

This sequence belongs to the IspH family. It depends on [4Fe-4S] cluster as a cofactor.

The enzyme catalyses isopentenyl diphosphate + 2 oxidized [2Fe-2S]-[ferredoxin] + H2O = (2E)-4-hydroxy-3-methylbut-2-enyl diphosphate + 2 reduced [2Fe-2S]-[ferredoxin] + 2 H(+). The catalysed reaction is dimethylallyl diphosphate + 2 oxidized [2Fe-2S]-[ferredoxin] + H2O = (2E)-4-hydroxy-3-methylbut-2-enyl diphosphate + 2 reduced [2Fe-2S]-[ferredoxin] + 2 H(+). Its pathway is isoprenoid biosynthesis; dimethylallyl diphosphate biosynthesis; dimethylallyl diphosphate from (2E)-4-hydroxy-3-methylbutenyl diphosphate: step 1/1. The protein operates within isoprenoid biosynthesis; isopentenyl diphosphate biosynthesis via DXP pathway; isopentenyl diphosphate from 1-deoxy-D-xylulose 5-phosphate: step 6/6. In terms of biological role, catalyzes the conversion of 1-hydroxy-2-methyl-2-(E)-butenyl 4-diphosphate (HMBPP) into a mixture of isopentenyl diphosphate (IPP) and dimethylallyl diphosphate (DMAPP). Acts in the terminal step of the DOXP/MEP pathway for isoprenoid precursor biosynthesis. The chain is 4-hydroxy-3-methylbut-2-enyl diphosphate reductase from Shouchella clausii (strain KSM-K16) (Alkalihalobacillus clausii).